The following is a 494-amino-acid chain: DEAD-box ATP-dependent RNA helicase 20 (494 aa).

The span at 1-20 shows a compositional bias: basic and acidic residues; the sequence is MSRFDGRAADPGSYRDRRSE. Residues 1–39 are disordered; it reads MSRFDGRAADPGSYRDRRSEGAFGGGTRAFAPTSKADSA. A compositionally biased stretch (low complexity) spans 29 to 39; the sequence is AFAPTSKADSA. Positions 91–119 match the Q motif motif; that stretch reads REFRDVGFPEYVLQEITKAGFVEPTPIQS. The 176-residue stretch at 122 to 297 folds into the Helicase ATP-binding domain; that stretch reads WPMALRGRDL…RNFLFDPYKV (176 aa). 135–142 is an ATP binding site; that stretch reads AETGSGKT. A DEAD box motif is present at residues 245 to 248; that stretch reads DEAD. The Helicase C-terminal domain occupies 325-470; the sequence is KLVNLLEDIM…KVSPELANMG (146 aa). The segment at 465–494 is disordered; sequence ELANMGRGAPPPSSGHRDRYRGYGGGRSWS.

The protein belongs to the DEAD box helicase family. DDX5/DBP2 subfamily.

The protein resides in the nucleus. It carries out the reaction ATP + H2O = ADP + phosphate + H(+). In terms of biological role, ATP-dependent RNA helicase involved nonsense-mediated mRNA decay and ribosome biogenesis through rRNA processing. The chain is DEAD-box ATP-dependent RNA helicase 20 from Oryza sativa subsp. japonica (Rice).